A 166-amino-acid polypeptide reads, in one-letter code: MSNIEKQTGELQEKLIAVNRVSKTVKGGRIMSFTALTVVGDGNGRVGFGYGKAREVPAAIQKAMEKARRNMINVALNDGTLQHPVKGVHTGSRVFMQPASEGTGIIAGGAMRAVLEVAGVRNVLSKAYGSTNPINVVRATIDALANMKSPETVAAKRGKTVDEILG.

The S5 DRBM domain maps to 11–74 (LQEKLIAVNR…EKARRNMINV (64 aa)).

The protein belongs to the universal ribosomal protein uS5 family. As to quaternary structure, part of the 30S ribosomal subunit. Contacts proteins S4 and S8.

Its function is as follows. With S4 and S12 plays an important role in translational accuracy. Located at the back of the 30S subunit body where it stabilizes the conformation of the head with respect to the body. The sequence is that of Small ribosomal subunit protein uS5 from Actinobacillus succinogenes (strain ATCC 55618 / DSM 22257 / CCUG 43843 / 130Z).